Here is a 669-residue protein sequence, read N- to C-terminus: DNA mismatch repair protein MutL (669 aa).

The segment at 356–377 is disordered; sequence FEQRQNTENNQEKTFSSEESNS. A compositionally biased stretch (polar residues) spans 361–377; it reads NTENNQEKTFSSEESNS.

This sequence belongs to the DNA mismatch repair MutL/HexB family.

This protein is involved in the repair of mismatches in DNA. It is required for dam-dependent methyl-directed DNA mismatch repair. May act as a 'molecular matchmaker', a protein that promotes the formation of a stable complex between two or more DNA-binding proteins in an ATP-dependent manner without itself being part of a final effector complex. The polypeptide is DNA mismatch repair protein MutL (Staphylococcus aureus (strain MSSA476)).